A 253-amino-acid polypeptide reads, in one-letter code: AA9 family lytic polysaccharide monooxygenase F (253 aa).

The N-terminal stretch at 1–16 (MKVLATLLASVGLVAA) is a signal peptide. H17 contributes to the Cu(2+) binding site. N22 carries an N-linked (GlcNAc...) asparagine glycan. Disulfide bonds link C75-C193 and C163-C253. H105 serves as a coordination point for Cu(2+). The N-linked (GlcNAc...) asparagine glycan is linked to N143. H179 and Q188 together coordinate O2. A Cu(2+)-binding site is contributed by Y190.

Belongs to the polysaccharide monooxygenase AA9 family. Cu(2+) is required as a cofactor.

Its subcellular location is the secreted. It catalyses the reaction [(1-&gt;4)-beta-D-glucosyl]n+m + reduced acceptor + O2 = 4-dehydro-beta-D-glucosyl-[(1-&gt;4)-beta-D-glucosyl]n-1 + [(1-&gt;4)-beta-D-glucosyl]m + acceptor + H2O.. Functionally, lytic polysaccharide monooxygenase (LPMO) that depolymerizes crystalline and amorphous polysaccharides via the oxidation of scissile alpha- or beta-(1-4)-glycosidic bonds, yielding C1 or C4 oxidation products. Catalysis by LPMOs requires the reduction of the active-site copper from Cu(II) to Cu(I) by a reducing agent and H(2)O(2) or O(2) as a cosubstrate. The polypeptide is AA9 family lytic polysaccharide monooxygenase F (Podospora anserina (strain S / ATCC MYA-4624 / DSM 980 / FGSC 10383) (Pleurage anserina)).